The chain runs to 794 residues: K(+)-insensitive pyrophosphate-energized proton pump (794 aa).

Transmembrane regions (helical) follow at residues 20 to 40 (ALVA…GVLV), 74 to 94 (TLGV…ADDW), 102 to 122 (IFFL…MWLA), 163 to 183 (GVVG…VVLV), and 194 to 214 (GFGL…GIFT). Position 215 (Lys-215) interacts with substrate. Mg(2+) contacts are provided by Asp-218, Asp-222, Asn-245, and Asp-248. A run of 6 helical transmembrane segments spans residues 264-284 (YAVT…DFGL), 285-305 (AFPL…IFAV), 321-341 (GFFI…FVYL), 365-385 (ILAL…QQLT), 422-442 (AVYT…LGGT), and 446-466 (LALF…GVIV). Residue Asp-476 coordinates Mg(2+). 3 consecutive transmembrane segments (helical) span residues 508–528 (AITK…LFGS), 564–584 (VGLI…INAV), and 641–661 (IFIG…GAIG). Ca(2+)-binding residues include Asp-678, Asp-704, and Asp-708. Lys-711 is a substrate binding site. 2 helical membrane passes run 717–737 (AINP…PAVI) and 747–767 (VVVR…AVYV).

Belongs to the H(+)-translocating pyrophosphatase (TC 3.A.10) family. K(+)-insensitive subfamily. In terms of assembly, homodimer. It depends on Mg(2+) as a cofactor.

It is found in the cell membrane. The enzyme catalyses diphosphate + H2O + H(+)(in) = 2 phosphate + 2 H(+)(out). Its function is as follows. Proton pump that utilizes the energy of pyrophosphate hydrolysis as the driving force for proton movement across the membrane. Generates a proton motive force. This is K(+)-insensitive pyrophosphate-energized proton pump from Streptomyces coelicolor (strain ATCC BAA-471 / A3(2) / M145).